Reading from the N-terminus, the 372-residue chain is uncharacterized protein (372 aa).

A PNPLA domain is found at Phe-38–Ile-270. Positions Gly-42 to Gly-47 match the GXGXXG motif. The GXSXG signature appears at Gly-74–Gly-78. Ser-76 serves as the catalytic Nucleophile. The active-site Proton acceptor is Asp-257. The DGA/G signature appears at Asp-257 to Gly-259.

Probable lipid hydrolase. This is an uncharacterized protein from Acanthamoeba polyphaga (Amoeba).